The primary structure comprises 182 residues: Regulatory protein RecX (182 aa).

Residues 12–54 (LSQRDHSESELRRKLAAPPFSAKGNWGKRSGAKSSNLVESNPV) form a disordered region. Positions 13-24 (SQRDHSESELRR) are enriched in basic and acidic residues. Residues 43 to 54 (AKSSNLVESNPV) show a composition bias toward polar residues.

Belongs to the RecX family.

The protein localises to the cytoplasm. Functionally, modulates RecA activity. This is Regulatory protein RecX from Yersinia pseudotuberculosis serotype I (strain IP32953).